Consider the following 410-residue polypeptide: Exopolygalacturonase (410 aa).

Residues 1–22 (MACTNNAMRALFLLVLFCIVHG) form the signal peptide. Asn89 carries an N-linked (GlcNAc...) asparagine glycan. PbH1 repeat units follow at residues 192-218 (CKDM…HMGD), 219-240 (SSGI…SIGP), 242-262 (TSKV…SIGS), 272-293 (VTDI…RIKA), and 337-377 (ASKV…TMDD). Asp233 (proton donor) is an active-site residue. Cys235 and Cys252 are joined by a disulfide. N-linked (GlcNAc...) asparagine glycosylation occurs at Asn246. The active site involves His256. Asn349 is a glycosylation site (N-linked (GlcNAc...) asparagine). The cysteines at positions 364 and 370 are disulfide-linked. N-linked (GlcNAc...) asparagine glycosylation is present at Asn387. A disulfide bridge connects residues Cys393 and Cys409.

It belongs to the glycosyl hydrolase 28 family. Pollen.

The protein resides in the secreted. It is found in the cell wall. It carries out the reaction [(1-&gt;4)-alpha-D-galacturonosyl](n) + H2O = alpha-D-galacturonate + [(1-&gt;4)-alpha-D-galacturonosyl](n-1). In terms of biological role, may function in depolymerizing pectin during pollen development, germination, and tube growth. Acts as an exo-polygalacturonase. The polypeptide is Exopolygalacturonase (PG1) (Zea mays (Maize)).